A 485-amino-acid polypeptide reads, in one-letter code: NADH-quinone oxidoreductase subunit N (485 aa).

The next 14 helical transmembrane spans lie at 8–28, 35–55, 71–91, 105–125, 127–147, 159–179, 203–223, 235–255, 271–291, 297–317, 326–346, 373–393, 408–430, and 455–475; these read LIAL…MLSI, FLNA…LWFV, GFAM…CTFA, FYLL…ANHL, SLFL…GYAF, YTIL…LVYA, LLAG…LVPF, PAPV…GVVM, VVLA…ALSQ, LLGY…IALQ, VGVY…VVSL, AAVM…LGFI, WWLV…RVAV, and IVVL…QPLI.

The protein belongs to the complex I subunit 2 family. NDH-1 is composed of 13 different subunits. Subunits NuoA, H, J, K, L, M, N constitute the membrane sector of the complex.

It is found in the cell inner membrane. The catalysed reaction is a quinone + NADH + 5 H(+)(in) = a quinol + NAD(+) + 4 H(+)(out). NDH-1 shuttles electrons from NADH, via FMN and iron-sulfur (Fe-S) centers, to quinones in the respiratory chain. The immediate electron acceptor for the enzyme in this species is believed to be ubiquinone. Couples the redox reaction to proton translocation (for every two electrons transferred, four hydrogen ions are translocated across the cytoplasmic membrane), and thus conserves the redox energy in a proton gradient. This Escherichia coli O1:K1 / APEC protein is NADH-quinone oxidoreductase subunit N.